The sequence spans 835 residues: Telomere length regulation protein TEL2 homolog (835 aa).

2 disordered regions span residues 455-501 (SADC…LAPY) and 629-648 (LSHEVSSESRSTGTGQHSIR). Positions 464–473 (ESSPSKSCPK) are enriched in low complexity. Over residues 474-486 (AIEKSKMEAKADQ) the composition is skewed to basic and acidic residues. A compositionally biased stretch (acidic residues) spans 488–499 (SDSELDSDDDLA). Over residues 636–648 (ESRSTGTGQHSIR) the composition is skewed to polar residues.

The protein belongs to the TEL2 family.

The protein resides in the cytoplasm. Its subcellular location is the membrane. It localises to the nucleus. The protein localises to the chromosome. It is found in the telomere. Its function is as follows. Regulator of the DNA damage response (DDR). Part of the TTT complex that is required to stabilize protein levels of the phosphatidylinositol 3-kinase-related protein kinase (PIKK) family proteins. Promotes assembly, stabilizes and maintains the activity of TORC complexes, which regulate cell growth and survival in response to nutrient and hormonal signals. May be involved in telomere length regulation. The sequence is that of Telomere length regulation protein TEL2 homolog (telo2) from Xenopus laevis (African clawed frog).